Here is an 872-residue protein sequence, read N- to C-terminus: Translation initiation factor IF-2 (872 aa).

The segment covering 130-155 (AEEEAARAAEEEAARLAEEEAARRAA) has biased composition (basic and acidic residues). The disordered stretch occupies residues 130–282 (AEEEAARAAE…RERERLKHMQ (153 aa)). The span at 156-181 (EPQSEPEAAAPAAEPVAPTAPVAAAP) shows a compositional bias: low complexity. Residues 182–194 (APAPATPVAPAQP) are compositionally biased toward pro residues. Residues 195–211 (KPVAAAAPAGDATAVPR) show a composition bias toward low complexity. Over residues 271-282 (RARERERLKHMQ) the composition is skewed to basic and acidic residues. The tr-type G domain occupies 371 to 539 (TRPPVVTVMG…AILLQAEILD (169 aa)). The segment at 380–387 (GHVDHGKT) is G1. 380 to 387 (GHVDHGKT) provides a ligand contact to GTP. Positions 405 to 409 (GITQH) are G2. A G3 region spans residues 427-430 (DTPG). Residues 427–431 (DTPGH) and 481–484 (NKID) each bind GTP. The segment at 481–484 (NKID) is G4. The interval 517 to 519 (SAK) is G5.

It belongs to the TRAFAC class translation factor GTPase superfamily. Classic translation factor GTPase family. IF-2 subfamily.

It is found in the cytoplasm. One of the essential components for the initiation of protein synthesis. Protects formylmethionyl-tRNA from spontaneous hydrolysis and promotes its binding to the 30S ribosomal subunits. Also involved in the hydrolysis of GTP during the formation of the 70S ribosomal complex. This chain is Translation initiation factor IF-2, found in Paramagnetospirillum magneticum (strain ATCC 700264 / AMB-1) (Magnetospirillum magneticum).